The following is a 292-amino-acid chain: MKLHFTKMHGAGNDFVVLDGIQTPIDFTPEQWAAIADRHFGVGADQLLLVERSTRPDVDFRYRIFNHDGGEVEHCGNGARCFVKFVTDRGLTDKRTVRVEVMNGIATLTMQDDGQVTVDMGAPVFEAARLPFLPEGLPTRTQGDDTQHALQINGRTEWLSTVSMGNPHAVQIVDDTEAFPVLEDGPLIESHAVFPRRVNAGFMQIVDRHSVRLRVYERGAGETLACGTGACAAVVAGIRRGLLDSPVKVATHGGDLTIAWAGDGQPVMMTGPATTVFEGTLDLDALKLTAAH.

Positions 13, 46, and 66 each coordinate substrate. Cys-75 functions as the Proton donor in the catalytic mechanism. Residues 76-77 (GN), Asn-166, Asn-199, and 217-218 (ER) contribute to the substrate site. Cys-226 serves as the catalytic Proton acceptor. Residue 227–228 (GT) participates in substrate binding.

The protein belongs to the diaminopimelate epimerase family. Homodimer.

It localises to the cytoplasm. It catalyses the reaction (2S,6S)-2,6-diaminopimelate = meso-2,6-diaminopimelate. It participates in amino-acid biosynthesis; L-lysine biosynthesis via DAP pathway; DL-2,6-diaminopimelate from LL-2,6-diaminopimelate: step 1/1. Catalyzes the stereoinversion of LL-2,6-diaminopimelate (L,L-DAP) to meso-diaminopimelate (meso-DAP), a precursor of L-lysine and an essential component of the bacterial peptidoglycan. The chain is Diaminopimelate epimerase from Ralstonia pickettii (strain 12J).